Here is a 335-residue protein sequence, read N- to C-terminus: Beta-ketoacyl-[acyl-carrier-protein] synthase III 1 (335 aa).

Active-site residues include Cys-116 and His-256. The segment at 257–261 (QANQR) is ACP-binding. The active site involves Asn-286.

The protein belongs to the thiolase-like superfamily. FabH family. Homodimer.

It localises to the cytoplasm. The catalysed reaction is malonyl-[ACP] + acetyl-CoA + H(+) = 3-oxobutanoyl-[ACP] + CO2 + CoA. The protein operates within lipid metabolism; fatty acid biosynthesis. Catalyzes the condensation reaction of fatty acid synthesis by the addition to an acyl acceptor of two carbons from malonyl-ACP. Catalyzes the first condensation reaction which initiates fatty acid synthesis and may therefore play a role in governing the total rate of fatty acid production. Possesses both acetoacetyl-ACP synthase and acetyl transacylase activities. Its substrate specificity determines the biosynthesis of branched-chain and/or straight-chain of fatty acids. The protein is Beta-ketoacyl-[acyl-carrier-protein] synthase III 1 of Bacteroides thetaiotaomicron (strain ATCC 29148 / DSM 2079 / JCM 5827 / CCUG 10774 / NCTC 10582 / VPI-5482 / E50).